The sequence spans 132 residues: Aspartate 1-decarboxylase (132 aa).

Catalysis depends on S25, which acts as the Schiff-base intermediate with substrate; via pyruvic acid. S25 carries the pyruvic acid (Ser) modification. T57 contacts substrate. Y58 serves as the catalytic Proton donor. Position 73-75 (73-75 (GAA)) interacts with substrate.

Belongs to the PanD family. As to quaternary structure, heterooctamer of four alpha and four beta subunits. Pyruvate is required as a cofactor. Post-translationally, is synthesized initially as an inactive proenzyme, which is activated by self-cleavage at a specific serine bond to produce a beta-subunit with a hydroxyl group at its C-terminus and an alpha-subunit with a pyruvoyl group at its N-terminus.

It is found in the cytoplasm. The enzyme catalyses L-aspartate + H(+) = beta-alanine + CO2. Its pathway is cofactor biosynthesis; (R)-pantothenate biosynthesis; beta-alanine from L-aspartate: step 1/1. In terms of biological role, catalyzes the pyruvoyl-dependent decarboxylation of aspartate to produce beta-alanine. This is Aspartate 1-decarboxylase from Geotalea uraniireducens (strain Rf4) (Geobacter uraniireducens).